Consider the following 366-residue polypeptide: Galactoside alpha-(1,2)-fucosyltransferase 1 (366 aa).

Topologically, residues M1–H8 are cytoplasmic. Residues L9–F25 form a helical; Signal-anchor for type II membrane protein membrane-spanning segment. Topologically, residues L26 to P366 are lumenal. N-linked (GlcNAc...) asparagine glycosylation is found at N66, N302, and N328.

It belongs to the glycosyltransferase 11 family.

It is found in the golgi apparatus. The protein resides in the golgi stack membrane. The catalysed reaction is a beta-D-galactosyl-(1-&gt;4)-N-acetyl-beta-D-glucosaminyl derivative + GDP-beta-L-fucose = an alpha-L-Fuc-(1-&gt;2)-beta-D-Gal-(1-&gt;4)-beta-D-GlcNAc derivative + GDP + H(+). It carries out the reaction a ganglioside GA1 + GDP-beta-L-fucose = a ganglioside Fuc-GA1 + GDP + H(+). The enzyme catalyses a beta-D-Gal-(1-&gt;3)-beta-D-GlcNAc-(1-&gt;3)-beta-D-Gal-(1-&gt;4)-beta-D-Glc-(1&lt;-&gt;1')-Cer(d18:1(4E)) + GDP-beta-L-fucose = alpha-L-fucosyl-(1-&gt;2)- beta-D-galactosyl-(1-&gt;3)-N-acetyl-beta-D-glucosaminyl-(1-&gt;3)-beta-D-galactosyl-(1-&gt;4)-beta-D-glucosyl-(1&lt;-&gt;1')-N-acylsphing-4-enine + GDP + H(+). It catalyses the reaction a neolactoside nLc4Cer(d18:1(4E)) + GDP-beta-L-fucose = a neolactoside IV(2)-alpha-Fuc-nLc4Cer(d18:1(4E)) + GDP + H(+). The catalysed reaction is a ganglioside GM1 + GDP-beta-L-fucose = a ganglioside Fuc-GM1 + GDP + H(+). It carries out the reaction beta-D-galactosyl-(1-&gt;3)-N-acetyl-D-galactosamine + GDP-beta-L-fucose = alpha-L-fucosyl-(1-&gt;2)-beta-D-galactosyl-(1-&gt;3)-N-acetyl-D-galactosamine + GDP + H(+). It participates in protein modification; protein glycosylation. Catalyzes the transfer of L-fucose, from a guanosine diphosphate-beta-L-fucose, to the terminal galactose residue of glycoconjugates through an alpha(1,2) linkage leading to H antigen synthesis that is an intermediate substrate in the synthesis of ABO blood group antigens. H antigen is essential for maturation of the glomerular layer of the main olfactory bulb, in cell migration and early cell-cell contacts during tumor associated angiogenesis. Preferentially fucosylates soluble lactose and to a lesser extent fucosylates glycolipids gangliosides GA1 and GM1a. The protein is Galactoside alpha-(1,2)-fucosyltransferase 1 of Alouatta caraya (Black howler monkey).